The primary structure comprises 765 residues: Carboxysome assembly protein CsoS2 (765 aa).

Positions 1–22 are enriched in basic and acidic residues; sequence MSTKTSREIALERRKAMSDGGK. Disordered stretches follow at residues 1 to 107 and 165 to 229; these read MSTK…RTDV and REAQ…NKNG. Positions 1–215 are N-terminal domain; it reads MSTKTSREIA…RSKTGSTSKQ (215 aa). Residues 7–22 form an N-repeat 1 repeat; that stretch reads REIALERRKAMSDGGK. The span at 38 to 63 shows a compositional bias: polar residues; the sequence is SQDINSTGATSSNKKVLTSPSKSNIP. Basic and acidic residues predominate over residues 77–87; sequence SSKELGIERRK. N-repeat repeat units lie at residues 79 to 94, 158 to 173, and 196 to 211; these read KELG…THGK, RDIV…KHGK, and REIS…KTGS. The span at 187-207 shows a compositional bias: basic and acidic residues; the sequence is RRGDPDLSSREISQRVRELRS. The interval 216-586 is middle region; the sequence is GNGKCRPCGP…LSNCETPPND (371 aa). 6 M-repeat repeats span residues 240-289, 300-349, 358-397, 411-460, 470-519, and 530-580; these read KVGK…GQFC, RASV…KKYC, KVMQ…GDQY, KVGS…EKFC, KVGL…NDNC, and RATV…LSNC. Disordered stretches follow at residues 306–328 and 367–413; these read TTSG…GDEP and GLKV…EKVG. Positions 589 to 734 are C-terminal domain; that stretch reads YANQEKSASN…AMPPVDNKRN (146 aa). C-repeat repeat units lie at residues 604 to 648 and 677 to 711; these read SVNS…GTEQ and KKEP…EGVS. Disordered regions lie at residues 611 to 637 and 656 to 765; these read EKYS…GPFD and NMTY…GARG. Residues 730-741 are compositionally biased toward basic and acidic residues; the sequence is DNKRNDETEKPD. A C-terminal peptide region spans residues 735-765; that stretch reads DETEKPDFLITGSSGNTRDGQLVTFSGGARG.

Belongs to the CsoS2 family. As to quaternary structure, probably interacts with the carboxysome major shell protein CsoS1 via the N-terminal domain. A CsoS1-CsoS1D-CsoS2 complex can be isolated following expression in E.coli. Interacts via its N-terminal repeats with RuBisCO. Unlike H.neapolitanus and predictions for P.marinus strain MIT 9313, this protein is not thought to have ribosomal frameshifting.

The protein localises to the carboxysome. In terms of biological role, required for alpha-carboxysome (Cb) assembly, mediates interaction between RuBisCO and the Cb shell. The protein is probably highly flexible. The C-terminal repeats act as the encapsulation signal to target proteins to the Cb; they are necessary and sufficient to target both CsoS2 and foreign proteins to the Cb. The N-terminal repeats of this protein bind simultaneously to both subunits of RuBisCO. Probably also interacts with the major shell proteins (CsoS1); that interaction would increase the local concentration of CsoS2 so that it can condense RuBisCO and full carboxysomes can be formed. There are estimated to be 163 CsoS2 proteins per carboxysome; unlike H.neapolitanus only 1 form is seen. The polypeptide is Carboxysome assembly protein CsoS2 (Prochlorococcus marinus subsp. pastoris (strain CCMP1986 / NIES-2087 / MED4)).